Here is a 165-residue protein sequence, read N- to C-terminus: Large ribosomal subunit protein uL10 (165 aa).

Belongs to the universal ribosomal protein uL10 family. As to quaternary structure, part of the ribosomal stalk of the 50S ribosomal subunit. The N-terminus interacts with L11 and the large rRNA to form the base of the stalk. The C-terminus forms an elongated spine to which L12 dimers bind in a sequential fashion forming a multimeric L10(L12)X complex.

Functionally, forms part of the ribosomal stalk, playing a central role in the interaction of the ribosome with GTP-bound translation factors. In Dechloromonas aromatica (strain RCB), this protein is Large ribosomal subunit protein uL10.